We begin with the raw amino-acid sequence, 544 residues long: MNDFWQHCSALLERELTPQQYVTWIKPLAPVAFDAAANTLSIAAPNRFKLDWVKSQFSGRIADMARDFWHTPIDVQFVLDPKAGMRAPAAAAPAPASARPASAPGSMGGSAGNGAAVDAAVGAVQAAQTARANGANSANNAMANLNANARAAAEQNANARAAAEDSADLDLPSLDANEAAAARRTWRPGQSAGSNGNGETDSMYERSKLNPVLTFDNFVTGKANQLARAAAIQVADNPGISYNPLFLYGGVGLGKTHLIHAIGNQLLMDKAGARIRYIHAEQYVSDVVKAYQRKAFDDFKRYYHSLDLLLIDDIQFFSGKSRTQEEFFYAFEALVANKAQVIITSDTYPKEISGIDDRLISRFDSGLTVAIEPPELEMRVAILMRKAQSEFVSLNEDVAFFVAKHLRSNVRELEGALRKILAYSKFHGREITIEVTKEALKDLLTVQNRQISVENIQKTTADFYSIKVADMYSKKRPANIARPRQIAMYLAKELTQKSLPEIGELFGGRDHTTVLHAVRKIADERSKDAQLNHELHVLEQTLKG.

A domain I, interacts with DnaA modulators region spans residues Met-1–Thr-71. A domain II region spans residues Thr-71–Ser-207. The segment covering Ala-90–Gly-105 has biased composition (low complexity). 2 disordered regions span residues Ala-90 to Ala-111 and Ala-180 to Met-203. The span at Ser-191 to Thr-200 shows a compositional bias: polar residues. The interval Lys-208–Ser-424 is domain III, AAA+ region. ATP-binding residues include Gly-252, Gly-254, Lys-255, and Thr-256. The interval Lys-425–Gly-544 is domain IV, binds dsDNA.

Belongs to the DnaA family. As to quaternary structure, oligomerizes as a right-handed, spiral filament on DNA at oriC.

The protein localises to the cytoplasm. Functionally, plays an essential role in the initiation and regulation of chromosomal replication. ATP-DnaA binds to the origin of replication (oriC) to initiate formation of the DNA replication initiation complex once per cell cycle. Binds the DnaA box (a 9 base pair repeat at the origin) and separates the double-stranded (ds)DNA. Forms a right-handed helical filament on oriC DNA; dsDNA binds to the exterior of the filament while single-stranded (ss)DNA is stabiized in the filament's interior. The ATP-DnaA-oriC complex binds and stabilizes one strand of the AT-rich DNA unwinding element (DUE), permitting loading of DNA polymerase. After initiation quickly degrades to an ADP-DnaA complex that is not apt for DNA replication. Binds acidic phospholipids. This Paraburkholderia xenovorans (strain LB400) protein is Chromosomal replication initiator protein DnaA.